The sequence spans 569 residues: Protein Noxp20 (569 aa).

3 disordered regions span residues Met-1–Thr-87, Gly-102–Arg-126, and Ala-165–Gly-208. Thr-197 carries the phosphothreonine modification. At Ser-262 the chain carries Phosphoserine. Residues Val-404 to Lys-439 are disordered.

This sequence belongs to the FAM114 family. As to expression, over-expressed in brain. Also detected in lung, stomach, and in a lower extent in testis and thymus.

The protein resides in the cytoplasm. May play a role in neuronal cell development. The sequence is that of Protein Noxp20 (Fam114a1) from Mus musculus (Mouse).